The sequence spans 668 residues: DNA-directed RNA polymerase subunit beta' (668 aa).

Residues Cys71, Cys73, Cys91, and Cys94 each coordinate Zn(2+). Mg(2+) contacts are provided by Asp505, Asp507, and Asp509.

It belongs to the RNA polymerase beta' chain family. RpoC1 subfamily. As to quaternary structure, in plastids the minimal PEP RNA polymerase catalytic core is composed of four subunits: alpha, beta, beta', and beta''. When a (nuclear-encoded) sigma factor is associated with the core the holoenzyme is formed, which can initiate transcription. Mg(2+) is required as a cofactor. Zn(2+) serves as cofactor.

The protein localises to the plastid. It is found in the chloroplast. It carries out the reaction RNA(n) + a ribonucleoside 5'-triphosphate = RNA(n+1) + diphosphate. Functionally, DNA-dependent RNA polymerase catalyzes the transcription of DNA into RNA using the four ribonucleoside triphosphates as substrates. This Mesostigma viride (Green alga) protein is DNA-directed RNA polymerase subunit beta'.